Here is a 520-residue protein sequence, read N- to C-terminus: MSDHLIPSIPTPAAAPAAAPAVDDNQLIAERREKLKLMRAAQAEGKGVAFPNDFKPGHRAAALIEAHGAADAEALEAQAVAVSVAGRMMLKRVMGKASFATVQDATSRIQLYVTRDAIGEEAYAEFKRWDLGDIVGAEGTLMKTKTGELSVKVTKLRLLTKSLRPLPDKFHGMADQEQKYRQRYVDLITDETARVRFTARSKAVSALREFMVGHGFLEVETPMLHPIPGGANAKPFKTHHNALDQEMFLRIAPELYLKRLIVGGFERVFEINRSYRNEGISVRHNPEFTMMEFYAAYWNYRDLMDFTETLIRTIADKAVGTQQLTYQGKPVDLTQPFERLTIREAILKYTEAGTGVDDSAWLINALRKIGLSEEKDKLSQRSLASLQVMYFEETVEEKLWQPTFIMEHPTEISPLARANDERPEVTERFELYITGREFGNGFSELNDAEDQAARFNAQVAAKDSGDDEAMFYDHDFVRALEYGMPPTGGCGIGIDRLMMLLTDSPSIRDVILFPALRRES.

A disordered region spans residues 1–21; it reads MSDHLIPSIPTPAAAPAAAPA. Residues 12–21 are compositionally biased toward low complexity; the sequence is PAAAPAAAPA. Mg(2+)-binding residues include Glu430 and Glu437.

It belongs to the class-II aminoacyl-tRNA synthetase family. Homodimer. The cofactor is Mg(2+).

It is found in the cytoplasm. It catalyses the reaction tRNA(Lys) + L-lysine + ATP = L-lysyl-tRNA(Lys) + AMP + diphosphate. This chain is Lysine--tRNA ligase, found in Variovorax paradoxus (strain S110).